The primary structure comprises 295 residues: Nucleotide-binding protein Lxx11490 (295 aa).

An ATP-binding site is contributed by 19 to 26; sequence GMSGAGRS. 70 to 73 contacts GTP; the sequence is DVRG.

It belongs to the RapZ-like family.

In terms of biological role, displays ATPase and GTPase activities. The protein is Nucleotide-binding protein Lxx11490 of Leifsonia xyli subsp. xyli (strain CTCB07).